Consider the following 388-residue polypeptide: MAGCCAALAAFLFEYDTPRIVLIRSRKVGLMNRAVQLLILAYVIGWVFVWEKGYQETDSVVSSVTTKVKGVAVTNTSKLGFRIWDVADYVIPAQEENSLFVMTNVILTMNQTQGLCPEIPDATTVCKSDASCTAGSAGTHSNGVSTGRCVAFNGSVKTCEVAAWCPVEDDTHVPQPAFLKAAENFTLLVKNNIWYPKFNFSKRNILPNITTTYLKSCIYDAKTDPFCPIFRLGKIVENAGHSFQDMAVEGGIMGIQVNWDCNLDRAASLCLPRYSFRRLDTRDVEHNVSPGYNFRFAKYYRDLAGNEQRTLIKAYGIRFDIIVFGKAGKFDIIPTMINIGSGLALLGMATVLCDIIVLYCMKKRLYYREKKYKYVEDYEQGLASELDQ.

Topologically, residues Met1–Arg33 are cytoplasmic. Residues Ala34–Tyr54 traverse the membrane as a helical segment. Topologically, residues Gln55–Asn338 are extracellular. ATP-binding residues include Lys67 and Lys69. CTP contacts are provided by Lys67 and Lys69. N-linked (GlcNAc...) asparagine glycosylation is found at Asn75 and Asn110. Cystine bridges form between Cys116–Cys165, Cys126–Cys149, and Cys132–Cys159. Residues Asn153 and Asn184 are each glycosylated (N-linked (GlcNAc...) asparagine). The ATP site is built by Thr186 and Leu188. CTP is bound at residue Thr186. N-linked (GlcNAc...) asparagine glycans are attached at residues Asn199 and Asn208. Disulfide bonds link Cys217-Cys227 and Cys261-Cys270. Positions 293, 295, and 313 each coordinate ATP. Residues Asn293, Arg295, and Lys313 each coordinate CTP. Residues Ile339–Tyr359 form a helical membrane-spanning segment. Topologically, residues Cys360 to Gln388 are cytoplasmic.

Belongs to the P2X receptor family. As to quaternary structure, functional P2RXs are organized as homomeric and heteromeric trimers. Forms heterotrimer with P2RX1. Interacts with P2RX7 (via C-terminus); this interaction is functional only in the presence of ATP. Forms heterotrimer with P2RX4; functional differences between homomeric P2RX4 and P2RX4/6 heterotrimer are minor. Interacts with AP1M2.

Its subcellular location is the cell membrane. The protein resides in the lysosome membrane. The catalysed reaction is K(+)(in) = K(+)(out). The enzyme catalyses Na(+)(in) = Na(+)(out). It catalyses the reaction Ca(2+)(in) = Ca(2+)(out). With respect to regulation, activated by ATP. pH-dependent and inhibited by acidic pH. ATP-gated nonselective transmembrane cation channel permeable to potassium, sodium and calcium. CTP, but not GTP or UTP, functions as a weak affinity agonist for P2RX4. Activated by extracellularly released ATP, it plays multiple role in immunity and central nervous system physiology. Plays a key role in initial steps of T-cell activation and Ca(2+) microdomain formation. Also participates in basal T-cell activity without TCR/CD3 stimulation. Promotes the differentiation and activation of Th17 cells via expression of retinoic acid-related orphan receptor C/RORC. Upon activation, drives microglia motility via the PI3K/Akt pathway. Could also function as an ATP-gated cation channel of lysosomal membranes. The polypeptide is P2X purinoceptor 4 (P2RX4) (Homo sapiens (Human)).